The chain runs to 439 residues: UPF0597 protein Dalk_4447 (439 aa).

It belongs to the UPF0597 family.

This Desulfatibacillum aliphaticivorans protein is UPF0597 protein Dalk_4447.